The primary structure comprises 570 residues: High-affinity hexose transporter HXT7 (570 aa).

Topologically, residues 1–60 (MSQDAAIAEQTPVEHLSAVDSASHSVLSTPSNKAERDEIKAYGEGEEHEPVVEIPKRPAS) are cytoplasmic. The chain crosses the membrane as a helical span at residues 61 to 81 (AYVTVSIMCIMIAFGGFVFGW). Over 82-116 (DTGTISGFINQTDFIRRFGMKHKDGTNYLSKVRTG) the chain is Extracellular. N-linked (GlcNAc...) asparagine glycosylation is present at asparagine 91. A helical transmembrane segment spans residues 117 to 137 (LIVSIFNIGCAIGGIILSKLG). Residues 138–143 (DMYGRK) lie on the Cytoplasmic side of the membrane. Residues 144–164 (VGLIVVVVIYIIGIIIQIASI) traverse the membrane as a helical segment. The Extracellular segment spans residues 165-174 (NKWYQYFIGR). Residues 175–195 (IISGLGVGGIAVLSPMLISEV) traverse the membrane as a helical segment. At 196 to 201 (SPKHLR) the chain is on the cytoplasmic side. The chain crosses the membrane as a helical span at residues 202-222 (GTLVSCYQLMITAGIFLGYCT). Over 223 to 236 (NFGTKNYSNSVQWR) the chain is Extracellular. The N-linked (GlcNAc...) asparagine glycan is linked to asparagine 228. Residues 237–257 (VPLGLCFAWALFMIGGMTFVP) traverse the membrane as a helical segment. The Cytoplasmic segment spans residues 258 to 340 (ESPRYLAEVG…IQSLQQLTGD (83 aa)). A helical transmembrane segment spans residues 341–357 (NYFFYYGTTIFKAVGLS). The Extracellular segment spans residues 358–363 (DSFETS). The helical transmembrane segment at 364–381 (IVLGIVNFASTFVGIYVV) threads the bilayer. The Cytoplasmic portion of the chain corresponds to 382–388 (ERYGRRT). Residues 389-409 (CLLWGAASMTACMVVYASVGV) traverse the membrane as a helical segment. At 410-431 (TRLWPNGQDQPSSKGAGNCMIV) the chain is on the extracellular side. The helical transmembrane segment at 432-452 (FACFYIFCFATTWAPIPYVVV) threads the bilayer. Residues 453–469 (SETFPLRVKSKAMSIAT) are Cytoplasmic-facing. A helical transmembrane segment spans residues 470–490 (AANWLWGFLIGFFTPFITGAI). A topological domain (extracellular) is located at residue asparagine 491. Residues 492-512 (FYYGYVFMGCLVFMFFYVLLV) traverse the membrane as a helical segment. Over 513–570 (VPETKGLTLEEVNTMWEEGVLPWKSASWVPPSRRGANYDAEEMTHDDKPLYKRMFSTK) the chain is Cytoplasmic. At threonine 556 the chain carries Phosphothreonine. Lysine 560 participates in a covalent cross-link: Glycyl lysine isopeptide (Lys-Gly) (interchain with G-Cter in ubiquitin).

Belongs to the major facilitator superfamily. Sugar transporter (TC 2.A.1.1) family.

The protein resides in the membrane. Its function is as follows. High-affinity glucose transporter. This chain is High-affinity hexose transporter HXT7 (HXT7), found in Saccharomyces cerevisiae (strain ATCC 204508 / S288c) (Baker's yeast).